We begin with the raw amino-acid sequence, 321 residues long: F-box protein At4g35930 (321 aa).

Residues 1–13 (MGKVSPKDLDSKT) show a composition bias toward basic and acidic residues. The disordered stretch occupies residues 1–23 (MGKVSPKDLDSKTSVRKKKLKSS). The F-box domain maps to 159 to 207 (ESQLESLPMDLLVKIVCHLHHDQLKAVFHVSQRIRMATILARQYHFNYT). The tract at residues 228 to 258 (WPFRRGDGNPTMVSSPHTPKAPKHAPRPPSR) is disordered.

This is F-box protein At4g35930 from Arabidopsis thaliana (Mouse-ear cress).